A 261-amino-acid polypeptide reads, in one-letter code: Esterase citA (261 aa).

Residues Ser-122, Asp-207, and His-235 each act as charge relay system in the active site.

The protein belongs to the LovG family.

Its pathway is mycotoxin biosynthesis. Functionally, non-reducing polyketide synthase; part of the gene cluster that mediates the biosynthesis of the mycotoxin citrinin, a hepato-nephrotoxic compound to humans due to inhibition of respiration complex III. The pathway begins with the synthesis of a keto-aldehyde intermediate by the citrinin PKS (pksCT also named citS) from successive condensations of 4 malonyl-CoA units, presumably with a simple acetyl-CoA starter unit. Release of the keto-aldehyde intermediate is consistent with the presence of the C-terminal reductive release domain. CitA collaborates with citS by catalyzing the hydrolysis of ACP-bound acyl intermediates to free the ACP from stalled intermediates. CitB then catalyzes the oxidation of the C-12 methyl of the ketone intermediate to an alcohol intermediate which is further oxidized by the oxidoreductase citC to produce a bisaldehyde intermediate. The fourth catalytic step is catalyzed by the citD aldehyde dehydrogenase. The final transformation is the reduction of C-3 by citE to provide the chemically stable citrinin nucleus. CitE appears highly selective for its substrate as its presence in any context other than a full complement of citS and citA-D does not result in observable new compounds. The chain is Esterase citA from Monascus ruber (Mold).